A 459-amino-acid chain; its full sequence is tRNA modification GTPase MnmE (459 aa).

Residues Arg-25, Glu-87, and Arg-126 each contribute to the (6S)-5-formyl-5,6,7,8-tetrahydrofolate site. The TrmE-type G domain occupies 221–380 (GLKVAIVGRP…LETAILEIVQ (160 aa)). Asn-231 contacts K(+). GTP-binding positions include 231-236 (NVGKSS), 250-256 (TDLPGTT), and 275-278 (DTAG). Residue Ser-235 coordinates Mg(2+). K(+)-binding residues include Thr-250, Leu-252, and Thr-255. Thr-256 is a binding site for Mg(2+). Lys-459 is a (6S)-5-formyl-5,6,7,8-tetrahydrofolate binding site.

The protein belongs to the TRAFAC class TrmE-Era-EngA-EngB-Septin-like GTPase superfamily. TrmE GTPase family. In terms of assembly, homodimer. Heterotetramer of two MnmE and two MnmG subunits. K(+) serves as cofactor.

The protein resides in the cytoplasm. Exhibits a very high intrinsic GTPase hydrolysis rate. Involved in the addition of a carboxymethylaminomethyl (cmnm) group at the wobble position (U34) of certain tRNAs, forming tRNA-cmnm(5)s(2)U34. This is tRNA modification GTPase MnmE from Nostoc sp. (strain PCC 7120 / SAG 25.82 / UTEX 2576).